The sequence spans 263 residues: Ribosomal RNA large subunit methyltransferase E (263 aa).

Positions 48, 50, 68, 88, and 118 each coordinate S-adenosyl-L-methionine. Lys-158 acts as the Proton acceptor in catalysis. The TRAM domain maps to 205 to 263 (PVREGDIVEATIEDIGEEGDGIAKVENFTVFVSGVEDGETVEVRIDDVKPRYAFAEPVE).

This sequence belongs to the class I-like SAM-binding methyltransferase superfamily. RNA methyltransferase RlmE family.

The protein resides in the cytoplasm. It carries out the reaction uridine(2552) in 23S rRNA + S-adenosyl-L-methionine = 2'-O-methyluridine(2552) in 23S rRNA + S-adenosyl-L-homocysteine + H(+). Specifically methylates the uridine in position 2552 of 23S rRNA at the 2'-O position of the ribose in the fully assembled 50S ribosomal subunit. In Haloarcula marismortui (strain ATCC 43049 / DSM 3752 / JCM 8966 / VKM B-1809) (Halobacterium marismortui), this protein is Ribosomal RNA large subunit methyltransferase E.